We begin with the raw amino-acid sequence, 66 residues long: MAKGKDARVSVILECTSCVRKNVNKESRGISRYITQKNRRNTPSRLELRKFCPYCYKHTIHGEIKK.

The protein belongs to the bacterial ribosomal protein bL33 family.

The protein localises to the plastid. The protein resides in the chloroplast. The polypeptide is Large ribosomal subunit protein bL33c (Fagopyrum esculentum subsp. ancestrale (Wild buckwheat)).